Here is a 226-residue protein sequence, read N- to C-terminus: PKHD-type hydroxylase TERTU_2553 (226 aa).

Residues lysine 78–serine 177 enclose the Fe2OG dioxygenase domain. Fe cation-binding residues include histidine 96, aspartate 98, and histidine 158. 2-oxoglutarate is bound at residue arginine 168.

Fe(2+) is required as a cofactor. It depends on L-ascorbate as a cofactor.

This chain is PKHD-type hydroxylase TERTU_2553, found in Teredinibacter turnerae (strain ATCC 39867 / T7901).